Consider the following 148-residue polypeptide: MPKGERLFMASLDQIIDDFVFLDDWEDRYRYVIELGKALPELAEEKRTPENKVMGCASQVWLVTHTSGDPENPIMSFEGDSDAHIVRGLVAIVLATYSGKPASEIAALDAFEIFSKIGLVENLSSQRSNGLRSMVKRIREEAKVRAAA.

Belongs to the SufE family.

This is an uncharacterized protein from Rhizobium etli (strain ATCC 51251 / DSM 11541 / JCM 21823 / NBRC 15573 / CFN 42).